The sequence spans 656 residues: tRNA 5-methylaminomethyl-2-thiouridine biosynthesis bifunctional protein MnmC (656 aa).

Residues 1–236 (MTDPLIPAVL…KRAMLVGHFA (236 aa)) form a tRNA (mnm(5)s(2)U34)-methyltransferase region. The tract at residues 260 to 656 (IGAGLAGCAV…LRALRQGAVS (397 aa)) is FAD-dependent cmnm(5)s(2)U34 oxidoreductase.

It in the N-terminal section; belongs to the methyltransferase superfamily. tRNA (mnm(5)s(2)U34)-methyltransferase family. The protein in the C-terminal section; belongs to the DAO family. It depends on FAD as a cofactor.

The protein localises to the cytoplasm. The enzyme catalyses 5-aminomethyl-2-thiouridine(34) in tRNA + S-adenosyl-L-methionine = 5-methylaminomethyl-2-thiouridine(34) in tRNA + S-adenosyl-L-homocysteine + H(+). In terms of biological role, catalyzes the last two steps in the biosynthesis of 5-methylaminomethyl-2-thiouridine (mnm(5)s(2)U) at the wobble position (U34) in tRNA. Catalyzes the FAD-dependent demodification of cmnm(5)s(2)U34 to nm(5)s(2)U34, followed by the transfer of a methyl group from S-adenosyl-L-methionine to nm(5)s(2)U34, to form mnm(5)s(2)U34. The polypeptide is tRNA 5-methylaminomethyl-2-thiouridine biosynthesis bifunctional protein MnmC (Paraburkholderia phytofirmans (strain DSM 17436 / LMG 22146 / PsJN) (Burkholderia phytofirmans)).